The primary structure comprises 472 residues: Serralysin A (472 aa).

Positions 1-17 (MEKNLSSRDDDALHSLS) are excised as a propeptide. Residue H186 participates in Zn(2+) binding. The active site involves E187. Positions 190 and 221 each coordinate Zn(2+). Positions 258, 260, 262, 290, 292, 293, 332, 334, 339, 341, 343, 348, 350, 352, 356, 357, 358, 359, 361, 365, 366, 367, 368, 370, 374, 375, 377, 379, 388, 395, and 405 each coordinate Ca(2+). Hemolysin-type calcium-binding repeat units lie at residues 337–354 (IGGS…DNIL) and 355–372 (RGGA…ADRL).

The protein belongs to the peptidase M10B family. It depends on Ca(2+) as a cofactor. The cofactor is Zn(2+).

It localises to the secreted. It catalyses the reaction Preferential cleavage of bonds with hydrophobic residues in P1'.. The protein is Serralysin A (prtA) of Dickeya chrysanthemi (Pectobacterium chrysanthemi).